We begin with the raw amino-acid sequence, 356 residues long: MPVNLKQLAELLGLSQTTVSRALNGYPEVNAETRARVLEAVRETGYRPNRAAQRLATGKAYSIGLVMPIAAGIDSDIHFGEFLAGLAEEAVEHDFHFVLNPSAPEDEEATFRRLAASGNVDAVFIAYMRANDPRIEMLKALSIPFVVHGRSIGGPRDYPFVDVDNTGAFYDAARLLIQLGHNRIALINGPEHLTFSIRRRKGLVRALAEKGLNLDDALVHHSAMTDEHGYRSMQRFLKRPAPPTAVLCSSTVLALGAVRAINQAGLAIGTDISLIAHDDVLPMLKPENFSVPLTTTRSSLRAAGARIAKRLIGGILNQGDYPEQELWRAELIVRASTGPAPDRSPLPNPSPQVGGA.

In terms of domain architecture, HTH lacI-type spans 1 to 57; sequence MPVNLKQLAELLGLSQTTVSRALNGYPEVNAETRARVLEAVRETGYRPNRAAQRLAT. The H-T-H motif DNA-binding region spans 5–24; the sequence is LKQLAELLGLSQTTVSRALN. The disordered stretch occupies residues 337–356; the sequence is TGPAPDRSPLPNPSPQVGGA.

Functionally, probable regulatory protein for the binding-protein-dependent transport system for alpha-glucosides such as sucrose, maltose and trehalose. This is HTH-type transcriptional regulator AglR (aglR) from Rhizobium meliloti (strain 1021) (Ensifer meliloti).